The following is a 147-amino-acid chain: Hemoglobin subunit gamma-1 (147 aa).

G2 carries the post-translational modification N-acetylglycine. The Globin domain maps to 3-147; it reads HFTEEDKATI…VASALSSRYH (145 aa). T13 is modified (phosphothreonine). Phosphoserine occurs at positions 45, 51, and 53. K60 is subject to N6-acetyllysine. Residue H64 participates in heme b binding. N6-acetyllysine is present on K83. Residue H93 coordinates heme b. S-nitrosocysteine is present on C94. S140 bears the Phosphoserine mark.

The protein belongs to the globin family. In terms of assembly, heterotetramer of two alpha chains and two gamma chains in fetal hemoglobin (Hb F). In terms of tissue distribution, red blood cells.

Its function is as follows. Gamma chains make up the fetal hemoglobin F, in combination with alpha chains. This chain is Hemoglobin subunit gamma-1 (HBG1), found in Gorilla gorilla gorilla (Western lowland gorilla).